The primary structure comprises 144 residues: Protein SprT-like (144 aa).

Positions 4–143 (NKYVQEVSLQ…GKCRGKLTLK (140 aa)) constitute a SprT-like domain. His-64 is a binding site for Zn(2+). Glu-65 is a catalytic residue. His-68 contributes to the Zn(2+) binding site.

Belongs to the SprT family. Requires Zn(2+) as cofactor.

It localises to the cytoplasm. This chain is Protein SprT-like, found in Streptococcus suis (strain 98HAH33).